Reading from the N-terminus, the 166-residue chain is Small ribosomal subunit protein uS5 (166 aa).

One can recognise an S5 DRBM domain in the interval 11-74 (LQEKLIAVNR…EKARRNMINV (64 aa)).

This sequence belongs to the universal ribosomal protein uS5 family. Part of the 30S ribosomal subunit. Contacts proteins S4 and S8.

Its function is as follows. With S4 and S12 plays an important role in translational accuracy. In terms of biological role, located at the back of the 30S subunit body where it stabilizes the conformation of the head with respect to the body. This chain is Small ribosomal subunit protein uS5, found in Actinobacillus pleuropneumoniae serotype 5b (strain L20).